A 132-amino-acid chain; its full sequence is Large ribosomal subunit protein bL17 (132 aa).

Belongs to the bacterial ribosomal protein bL17 family. As to quaternary structure, part of the 50S ribosomal subunit. Contacts protein L32.

The sequence is that of Large ribosomal subunit protein bL17 from Saccharophagus degradans (strain 2-40 / ATCC 43961 / DSM 17024).